We begin with the raw amino-acid sequence, 62 residues long: Large ribosomal subunit protein eL37 (62 aa).

C20, C23, C35, and C38 together coordinate Zn(2+). The C4-type zinc finger occupies 20-38 (CRRCGRVSYNVKKGYCAAC).

The protein belongs to the eukaryotic ribosomal protein eL37 family. Part of the 50S ribosomal subunit. Zn(2+) serves as cofactor.

In terms of biological role, binds to the 23S rRNA. This chain is Large ribosomal subunit protein eL37, found in Pyrococcus furiosus (strain ATCC 43587 / DSM 3638 / JCM 8422 / Vc1).